Reading from the N-terminus, the 109-residue chain is Spermidine export protein MdtI (109 aa).

4 helical membrane passes run 6-26, 36-56, 64-84, and 88-108; these read WIHA…NVFL, IYGI…SQAV, AYAL…WVLF, and LNNK…LIKL.

The protein belongs to the drug/metabolite transporter (DMT) superfamily. Small multidrug resistance (SMR) (TC 2.A.7.1) family. MdtI subfamily. As to quaternary structure, forms a complex with MdtJ.

Its subcellular location is the cell inner membrane. Its function is as follows. Catalyzes the excretion of spermidine. The sequence is that of Spermidine export protein MdtI from Klebsiella pneumoniae subsp. pneumoniae (strain ATCC 700721 / MGH 78578).